A 667-amino-acid chain; its full sequence is tRNA 5-methylaminomethyl-2-thiouridine biosynthesis bifunctional protein MnmC (667 aa).

The tRNA (mnm(5)s(2)U34)-methyltransferase stretch occupies residues 1-215; sequence MKFINGILFN…KREMIRAYFN (215 aa). The FAD-dependent cmnm(5)s(2)U34 oxidoreductase stretch occupies residues 240–667; that stretch reads IGAGIAGIVT…LIRKLKKGLK (428 aa).

It in the N-terminal section; belongs to the methyltransferase superfamily. tRNA (mnm(5)s(2)U34)-methyltransferase family. In the C-terminal section; belongs to the DAO family. FAD is required as a cofactor.

Its subcellular location is the cytoplasm. It catalyses the reaction 5-aminomethyl-2-thiouridine(34) in tRNA + S-adenosyl-L-methionine = 5-methylaminomethyl-2-thiouridine(34) in tRNA + S-adenosyl-L-homocysteine + H(+). Functionally, catalyzes the last two steps in the biosynthesis of 5-methylaminomethyl-2-thiouridine (mnm(5)s(2)U) at the wobble position (U34) in tRNA. Catalyzes the FAD-dependent demodification of cmnm(5)s(2)U34 to nm(5)s(2)U34, followed by the transfer of a methyl group from S-adenosyl-L-methionine to nm(5)s(2)U34, to form mnm(5)s(2)U34. The chain is tRNA 5-methylaminomethyl-2-thiouridine biosynthesis bifunctional protein MnmC from Campylobacter hominis (strain ATCC BAA-381 / DSM 21671 / CCUG 45161 / LMG 19568 / NCTC 13146 / CH001A).